The primary structure comprises 240 residues: Sugar fermentation stimulation protein homolog (240 aa).

The protein belongs to the SfsA family.

In Saccharolobus islandicus (strain M.16.4 / Kamchatka #3) (Sulfolobus islandicus), this protein is Sugar fermentation stimulation protein homolog.